The following is a 659-amino-acid chain: Putative oxidoreductase AegA (659 aa).

5 4Fe-4S ferredoxin-type domains span residues 3–22, 47–77, 78–107, 114–147, and 218–252; these read RFIMANSQQCLGCHACEIAC, HQQQRSAVTCHHCEDAPCARSCPNGAISHVD, DSIQVNQQKCIGCKSCVVACPFGTMQIVLT, VKATAHKCDLCAGRENGPACVENCPADALQLVTD, and DQAQREASRCLKCGEHSVCEWTCPLHNHIPQWIEL. [4Fe-4S] cluster contacts are provided by Cys12, Cys15, Cys18, Cys22, Cys56, Cys59, Cys64, Cys68, Cys87, Cys90, Cys93, Cys97, Cys121, Cys124, Cys133, Cys137, Cys227, Cys230, Cys236, and Cys240.

It depends on [4Fe-4S] cluster as a cofactor.

Its function is as follows. Involved in formate-dependent uric acid degradation under microaerobic and anaerobic conditions. May reduce the enzymes necessary for uric acid degradation. In Escherichia coli (strain K12), this protein is Putative oxidoreductase AegA.